The sequence spans 264 residues: Putative hydro-lyase RBAM_004300 (264 aa).

The protein belongs to the D-glutamate cyclase family.

In Bacillus velezensis (strain DSM 23117 / BGSC 10A6 / LMG 26770 / FZB42) (Bacillus amyloliquefaciens subsp. plantarum), this protein is Putative hydro-lyase RBAM_004300.